We begin with the raw amino-acid sequence, 160 residues long: Succinate dehydrogenase assembly factor 2-B, mitochondrial (160 aa).

A mitochondrion-targeting transit peptide spans 1–23 (MLRQLKLTLNISRWIFMPWQRHA).

It belongs to the SDHAF2 family. In terms of assembly, interacts with the flavoprotein subunit within the SDH catalytic dimer.

It is found in the mitochondrion matrix. Functionally, plays an essential role in the assembly of succinate dehydrogenase (SDH), an enzyme complex (also referred to as respiratory complex II) that is a component of both the tricarboxylic acid (TCA) cycle and the mitochondrial electron transport chain, and which couples the oxidation of succinate to fumarate with the reduction of ubiquinone (coenzyme Q) to ubiquinol. Required for flavinylation (covalent attachment of FAD) of the flavoprotein subunit of the SDH catalytic dimer. The chain is Succinate dehydrogenase assembly factor 2-B, mitochondrial from Drosophila pseudoobscura pseudoobscura (Fruit fly).